The primary structure comprises 127 residues: Large ribosomal subunit protein bL12 (127 aa).

This sequence belongs to the bacterial ribosomal protein bL12 family. In terms of assembly, homodimer. Part of the ribosomal stalk of the 50S ribosomal subunit. Forms a multimeric L10(L12)X complex, where L10 forms an elongated spine to which 2 to 4 L12 dimers bind in a sequential fashion. Binds GTP-bound translation factors.

In terms of biological role, forms part of the ribosomal stalk which helps the ribosome interact with GTP-bound translation factors. Is thus essential for accurate translation. This is Large ribosomal subunit protein bL12 from Rhizobium etli (strain CIAT 652).